We begin with the raw amino-acid sequence, 581 residues long: MAATKHSLADSEDRPTKKTKVDSEEKARLKAEKRERKEKKKSQESEPSAENSDADRAAEKERKKAKKAKKLEKKQKLAEAEASAEPAAEVSDEAPKKSKKEKKTTTTEASSNSEAPSSGSYIQTIALSNVPQAEIDEFLSKNEIHITDPKTENVTLRPVLEFHQLPATNLLEKKPSPFANYKAPTPIQSASWPFTLSGRDVIGVAETGSGKTMAFALPCVEAISALKHKHTKAVVVSPTRELAMQTYEQMASVAALNRMKCVCLYGGASKDDQRNLLNRGADIIVATPGRLKDFMSDGTVDLSHSAFAVLDEADRMLDKGFEEDIKMILSSCPPREKRQTLMFTATWPQSVQTLAATFMVSPVKIAIGSGGKETAGGAVELQANARISQSVEVLEPRGKEFRLLEVLKEHQQGSKKNDRILVFCLYKKEATRIENFLSRKGIRVGGIHGDLRQEQRTRSLEAFKSGQTPVLVATDVAARGLDIPEVKLVINVTFPLTIEDYVHRIGRTGRAGKTGQAITFFTVEDKSHSGSLVNILRGANQPVPEDLLKFGTTVKKKAHDMYGAFFKDVDMNAKSTKITFD.

The disordered stretch occupies residues 1-118 (MAATKHSLAD…ASSNSEAPSS (118 aa)). Basic and acidic residues-rich tracts occupy residues 7-35 (SLAD…EKRE) and 53-62 (DADRAAEKER). The segment covering 63 to 73 (KKAKKAKKLEK) has biased composition (basic residues). Composition is skewed to low complexity over residues 80–89 (AEASAEPAAE) and 106–118 (TTEA…APSS). The Q motif motif lies at 160–189 (LEFHQLPATNLLEKKPSPFANYKAPTPIQS). The Helicase ATP-binding domain maps to 192–365 (WPFTLSGRDV…ATFMVSPVKI (174 aa)). 205–212 (AETGSGKT) is a binding site for ATP. Positions 311–314 (DEAD) match the DEAD box motif. One can recognise a Helicase C-terminal domain in the interval 402 to 551 (RLLEVLKEHQ…PVPEDLLKFG (150 aa)).

This sequence belongs to the DEAD box helicase family. DDX5/DBP2 subfamily.

It is found in the nucleus. Its subcellular location is the nucleolus. It catalyses the reaction ATP + H2O = ADP + phosphate + H(+). ATP-dependent RNA helicase required for 60S ribosomal subunit synthesis. Involved in efficient pre-rRNA processing, predominantly at site A3, which is necessary for the normal formation of 25S and 5.8S rRNAs. The protein is ATP-dependent RNA helicase DBP3 (DBP3) of Gibberella zeae (strain ATCC MYA-4620 / CBS 123657 / FGSC 9075 / NRRL 31084 / PH-1) (Wheat head blight fungus).